The following is a 215-amino-acid chain: Large ribosomal subunit protein uL4 (215 aa).

A disordered region spans residues 43–97 (RRQGTHSTKTRAEVSGGGKKPWRQKGTGRARAGSTRSPIWVGGGKTHTPKPRDYS).

It belongs to the universal ribosomal protein uL4 family. As to quaternary structure, part of the 50S ribosomal subunit.

One of the primary rRNA binding proteins, this protein initially binds near the 5'-end of the 23S rRNA. It is important during the early stages of 50S assembly. It makes multiple contacts with different domains of the 23S rRNA in the assembled 50S subunit and ribosome. In terms of biological role, forms part of the polypeptide exit tunnel. The protein is Large ribosomal subunit protein uL4 of Brachyspira hyodysenteriae (strain ATCC 49526 / WA1).